We begin with the raw amino-acid sequence, 479 residues long: Sulfate adenylyltransferase subunit 1 (479 aa).

The 215-residue stretch at 25 to 239 (KSLLRFLTCG…EVLETVDIQR (215 aa)) folds into the tr-type G domain. A G1 region spans residues 34-41 (GSVDDGKS). GTP is bound at residue 34-41 (GSVDDGKS). The segment at 92–96 (GITID) is G2. The tract at residues 113 to 116 (DTPG) is G3. GTP is bound by residues 113-117 (DTPGH) and 168-171 (NKMD). The G4 stretch occupies residues 168–171 (NKMD). Residues 206-208 (SAL) form a G5 region.

The protein belongs to the TRAFAC class translation factor GTPase superfamily. Classic translation factor GTPase family. CysN/NodQ subfamily. As to quaternary structure, heterodimer composed of CysD, the smaller subunit, and CysN.

It catalyses the reaction sulfate + ATP + H(+) = adenosine 5'-phosphosulfate + diphosphate. The protein operates within sulfur metabolism; hydrogen sulfide biosynthesis; sulfite from sulfate: step 1/3. In terms of biological role, with CysD forms the ATP sulfurylase (ATPS) that catalyzes the adenylation of sulfate producing adenosine 5'-phosphosulfate (APS) and diphosphate, the first enzymatic step in sulfur assimilation pathway. APS synthesis involves the formation of a high-energy phosphoric-sulfuric acid anhydride bond driven by GTP hydrolysis by CysN coupled to ATP hydrolysis by CysD. The protein is Sulfate adenylyltransferase subunit 1 of Salmonella choleraesuis (strain SC-B67).